A 559-amino-acid chain; its full sequence is Tissue-type plasminogen activator (559 aa).

The N-terminal stretch at 1 to 17 (MKGELLCVLLLCGVAFT) is a signal peptide. A propeptide spanning residues 18–29 (LPDQGIHRRFRR) is cleaved from the precursor. The propeptide at 30 to 32 (GAR) is removed by plasmin. Positions 36–78 (ATCRDEQTQTTYQQHQSWLRPMLRGNRVEYCRCNSGLAQCHSV) constitute a Fibronectin type-I domain. 17 cysteine pairs are disulfide-bonded: Cys38/Cys68, Cys66/Cys75, Cys83/Cys94, Cys88/Cys105, Cys107/Cys116, Cys124/Cys205, Cys145/Cys187, Cys176/Cys200, Cys213/Cys294, Cys234/Cys276, Cys265/Cys289, Cys297/Cys428, Cys340/Cys356, Cys348/Cys417, Cys442/Cys516, Cys474/Cys490, and Cys506/Cys534. Residues 39–49 (RDEQTQTTYQQ) are important for binding to annexin A2. Residues 79–117 (PVRSCSEPRCFNGGTCQQALYFSDFVCQCPDGFVGKRCD) form the EGF-like domain. Kringle domains lie at 124 to 205 (CFEG…TPAC) and 213 to 294 (CYVG…MSPC). Asn149 carries N-linked (GlcNAc...) asparagine glycosylation. Residues 309–558 (IKGGLFTDIT…YLNWIQDNMK (250 aa)) form the Peptidase S1 domain. Catalysis depends on charge relay system residues His355 and Asp404. Residue Asn481 is glycosylated (N-linked (GlcNAc...) asparagine). Ser510 acts as the Charge relay system in catalysis.

This sequence belongs to the peptidase S1 family. Heterodimer of chain A and chain B held by a disulfide bond. Binds to fibrin with high affinity. This interaction leads to an increase in the catalytic efficiency of the enzyme due to an increase in affinity for plasminogen. Similarly, binding to heparin increases the activation of plasminogen. Binds to annexin A2, cytokeratin-8, fibronectin and laminin. Binds to mannose receptor and the low-density lipoprotein receptor-related protein (LRP1); these proteins are involved in TPA clearance. Binds LRP1B; binding is followed by internalization and degradation. Forms heterodimer with SERPINA5. Interacts with SERPINE1. In complex with SERPINE1, interacts with SORL1. Post-translationally, the single chain, almost fully active enzyme, can be further processed into a two-chain fully active form by a cleavage after Arg-308 catalyzed by plasmin, tissue kallikrein or factor Xa.

Its subcellular location is the secreted. It localises to the extracellular space. The catalysed reaction is Specific cleavage of Arg-|-Val bond in plasminogen to form plasmin.. Inhibited by SERPINA5. Inhibited by SERPINE1. In terms of biological role, converts the abundant, but inactive, zymogen plasminogen to plasmin by hydrolyzing a single Arg-Val bond in plasminogen. By controlling plasmin-mediated proteolysis, it plays an important role in tissue remodeling and degradation, in cell migration and many other physiopathological events. During oocyte activation, plays a role in cortical granule reaction in the zona reaction, which contributes to the block to polyspermy. The polypeptide is Tissue-type plasminogen activator (Plat) (Rattus norvegicus (Rat)).